The chain runs to 142 residues: Hemoglobin subunit alpha (142 aa).

A Globin domain is found at 1 to 142; it reads VLSAADKNNV…VSTVLTSKYR (142 aa). Ser3 carries the phosphoserine modification. An N6-succinyllysine mark is found at Lys7 and Lys11. Lys16 bears the N6-acetyllysine; alternate mark. The residue at position 16 (Lys16) is an N6-succinyllysine; alternate. Tyr24 is subject to Phosphotyrosine. The residue at position 35 (Ser35) is a Phosphoserine. Residue Lys40 is modified to N6-succinyllysine. His58 contributes to the O2 binding site. His87 serves as a coordination point for heme b. At Ser102 the chain carries Phosphoserine. Thr108 is modified (phosphothreonine). At Ser125 the chain carries Phosphoserine. 2 positions are modified to phosphothreonine: Thr135 and Thr138. Ser139 is subject to Phosphoserine.

This sequence belongs to the globin family. Heterotetramer of two alpha chains and two beta chains. In terms of tissue distribution, red blood cells.

Functionally, involved in oxygen transport from the lung to the various peripheral tissues. In terms of biological role, hemopressin acts as an antagonist peptide of the cannabinoid receptor CNR1. Hemopressin-binding efficiently blocks cannabinoid receptor CNR1 and subsequent signaling. This chain is Hemoglobin subunit alpha (HBA), found in Procavia capensis habessinica (Abyssinian hyrax).